Consider the following 269-residue polypeptide: Protein BASIC PENTACYSTEINE3 (269 aa).

The protein belongs to the BBR/BPC family. In terms of tissue distribution, expressed in seedlings, leaves and pistils. Detected in the base of flowers and tips of carpels, in petal vasculature, in anthers, in young rosette, in the lateral and primary roots, and in the gynobasal portion of the ovule.

It is found in the nucleus. Its function is as follows. Transcriptional regulator that specifically binds to GA-rich elements (GAGA-repeats) present in regulatory sequences of genes involved in developmental processes. The polypeptide is Protein BASIC PENTACYSTEINE3 (BPC3) (Arabidopsis thaliana (Mouse-ear cress)).